A 139-amino-acid chain; its full sequence is S-adenosylmethionine decarboxylase proenzyme (139 aa).

Catalysis depends on Ser-63, which acts as the Schiff-base intermediate with substrate; via pyruvic acid. Ser-63 carries the pyruvic acid (Ser); by autocatalysis modification. His-68 (proton acceptor; for processing activity) is an active-site residue. The Proton donor; for catalytic activity role is filled by Cys-83.

Belongs to the prokaryotic AdoMetDC family. Type 1 subfamily. Heterotetramer of two alpha and two beta chains arranged as a dimer of alpha/beta heterodimers. Pyruvate is required as a cofactor. Post-translationally, is synthesized initially as an inactive proenzyme. Formation of the active enzyme involves a self-maturation process in which the active site pyruvoyl group is generated from an internal serine residue via an autocatalytic post-translational modification. Two non-identical subunits are generated from the proenzyme in this reaction, and the pyruvate is formed at the N-terminus of the alpha chain, which is derived from the carboxyl end of the proenzyme. The post-translation cleavage follows an unusual pathway, termed non-hydrolytic serinolysis, in which the side chain hydroxyl group of the serine supplies its oxygen atom to form the C-terminus of the beta chain, while the remainder of the serine residue undergoes an oxidative deamination to produce ammonia and the pyruvoyl group blocking the N-terminus of the alpha chain.

It catalyses the reaction S-adenosyl-L-methionine + H(+) = S-adenosyl 3-(methylsulfanyl)propylamine + CO2. Its pathway is amine and polyamine biosynthesis; S-adenosylmethioninamine biosynthesis; S-adenosylmethioninamine from S-adenosyl-L-methionine: step 1/1. Its function is as follows. Catalyzes the decarboxylation of S-adenosylmethionine to S-adenosylmethioninamine (dcAdoMet), the propylamine donor required for the synthesis of the polyamines spermine and spermidine from the diamine putrescine. This chain is S-adenosylmethionine decarboxylase proenzyme, found in Pyrococcus furiosus (strain ATCC 43587 / DSM 3638 / JCM 8422 / Vc1).